Here is a 200-residue protein sequence, read N- to C-terminus: UPF0301 protein BruAb1_0502 (200 aa).

Belongs to the UPF0301 (AlgH) family.

The chain is UPF0301 protein BruAb1_0502 from Brucella abortus biovar 1 (strain 9-941).